The sequence spans 478 residues: ATP synthase subunit beta (478 aa).

163 to 170 (GGAGVGKT) is a binding site for ATP.

This sequence belongs to the ATPase alpha/beta chains family. In terms of assembly, F-type ATPases have 2 components, CF(1) - the catalytic core - and CF(0) - the membrane proton channel. CF(1) has five subunits: alpha(3), beta(3), gamma(1), delta(1), epsilon(1). CF(0) has three main subunits: a(1), b(2) and c(9-12). The alpha and beta chains form an alternating ring which encloses part of the gamma chain. CF(1) is attached to CF(0) by a central stalk formed by the gamma and epsilon chains, while a peripheral stalk is formed by the delta and b chains.

Its subcellular location is the cell inner membrane. It carries out the reaction ATP + H2O + 4 H(+)(in) = ADP + phosphate + 5 H(+)(out). Functionally, produces ATP from ADP in the presence of a proton gradient across the membrane. The catalytic sites are hosted primarily by the beta subunits. This Aquifex pyrophilus protein is ATP synthase subunit beta.